The chain runs to 189 residues: Pyridoxal 5'-phosphate synthase subunit PdxT (189 aa).

Residue 52–54 (GES) coordinates L-glutamine. The Nucleophile role is filled by Cys81. L-glutamine-binding positions include Arg108 and 136–137 (IR). Catalysis depends on charge relay system residues His172 and Glu174.

This sequence belongs to the glutaminase PdxT/SNO family. As to quaternary structure, in the presence of PdxS, forms a dodecamer of heterodimers. Only shows activity in the heterodimer.

The catalysed reaction is aldehydo-D-ribose 5-phosphate + D-glyceraldehyde 3-phosphate + L-glutamine = pyridoxal 5'-phosphate + L-glutamate + phosphate + 3 H2O + H(+). It carries out the reaction L-glutamine + H2O = L-glutamate + NH4(+). It functions in the pathway cofactor biosynthesis; pyridoxal 5'-phosphate biosynthesis. Functionally, catalyzes the hydrolysis of glutamine to glutamate and ammonia as part of the biosynthesis of pyridoxal 5'-phosphate. The resulting ammonia molecule is channeled to the active site of PdxS. The protein is Pyridoxal 5'-phosphate synthase subunit PdxT of Haemophilus ducreyi (strain 35000HP / ATCC 700724).